The primary structure comprises 157 residues: UPF0756 membrane protein BH3161 (157 aa).

The next 4 membrane-spanning stretches (helical) occupy residues 1-21 (MISQ…LAKN), 54-74 (LGVT…EIGF), 87-107 (WVAL…IDLL), and 117-137 (LVLG…GPLI).

This sequence belongs to the UPF0756 family.

It localises to the cell membrane. This chain is UPF0756 membrane protein BH3161, found in Halalkalibacterium halodurans (strain ATCC BAA-125 / DSM 18197 / FERM 7344 / JCM 9153 / C-125) (Bacillus halodurans).